A 206-amino-acid polypeptide reads, in one-letter code: Thymidylate kinase (206 aa).

ATP is bound at residue 11 to 18; the sequence is GIDGAGKT.

The protein belongs to the thymidylate kinase family.

It catalyses the reaction dTMP + ATP = dTDP + ADP. Functionally, phosphorylation of dTMP to form dTDP in both de novo and salvage pathways of dTTP synthesis. The chain is Thymidylate kinase from Burkholderia vietnamiensis (strain G4 / LMG 22486) (Burkholderia cepacia (strain R1808)).